The primary structure comprises 780 residues: Vezatin (780 aa).

Transmembrane regions (helical) follow at residues 140-160 (ATPNTWDVSLLFAFISLLIMF) and 162-182 (TCWIVSSWLVWGIILFLYLII). Positions 430–467 (VRSLQLHLKALLNEVIILEDELEKLVCTKETQELLSEA) form a coiled coil. Disordered stretches follow at residues 620 to 718 (DPVE…PRDT) and 757 to 780 (QEQTFGDEEEEQLVEGGENEVEEK). The segment covering 624 to 643 (SVSNSEPPMNSDTEKVNSNA) has biased composition (polar residues). Basic and acidic residues-rich tracts occupy residues 647–663 (ETSKPCAGDKEDSRTEY) and 690–699 (TMCHQHESEA). Over residues 702 to 711 (PQAAAAGATA) the composition is skewed to low complexity. Residues 761–780 (FGDEEEEQLVEGGENEVEEK) show a composition bias toward acidic residues.

The protein belongs to the vezatin family. As to quaternary structure, interacts with USH2A (via the cytoplasmic region); the interaction associates VEZT with the USH2 complex at the stereocilia base. Interacts with myosin MYO7A and the cadherin-catenins complex. As to expression, expressed in developing cochlear hair cells. Isoform 1, isoform 2 and isoform 3 are expressed in testis. In the seminiferous epithelium, present exclusively in the acrosome of spermatids (at protein level).

The protein localises to the cell membrane. It is found in the cell projection. It localises to the stereocilium membrane. The protein resides in the cell junction. Its subcellular location is the adherens junction. The protein localises to the nucleus. It is found in the cytoplasmic vesicle. It localises to the secretory vesicle. The protein resides in the acrosome. Its function is as follows. Plays a pivotal role in the establishment of adherens junctions and their maintenance in adult life. Required for morphogenesis of the preimplantation embryo, and for the implantation process. The chain is Vezatin from Mus musculus (Mouse).